The sequence spans 262 residues: Thiazole synthase (262 aa).

K97 acts as the Schiff-base intermediate with DXP in catalysis. Residues G158, 185 to 186 (AG), and 207 to 208 (NT) contribute to the 1-deoxy-D-xylulose 5-phosphate site. A disordered region spans residues 243 to 262 (DKAQASTPTVGQPFWHSAEY).

Belongs to the ThiG family. As to quaternary structure, homotetramer. Forms heterodimers with either ThiH or ThiS.

The protein resides in the cytoplasm. It catalyses the reaction [ThiS sulfur-carrier protein]-C-terminal-Gly-aminoethanethioate + 2-iminoacetate + 1-deoxy-D-xylulose 5-phosphate = [ThiS sulfur-carrier protein]-C-terminal Gly-Gly + 2-[(2R,5Z)-2-carboxy-4-methylthiazol-5(2H)-ylidene]ethyl phosphate + 2 H2O + H(+). It participates in cofactor biosynthesis; thiamine diphosphate biosynthesis. Its function is as follows. Catalyzes the rearrangement of 1-deoxy-D-xylulose 5-phosphate (DXP) to produce the thiazole phosphate moiety of thiamine. Sulfur is provided by the thiocarboxylate moiety of the carrier protein ThiS. In vitro, sulfur can be provided by H(2)S. This is Thiazole synthase from Neisseria meningitidis serogroup A / serotype 4A (strain DSM 15465 / Z2491).